Reading from the N-terminus, the 794-residue chain is MVHSESSILSSLRGGDGGGIPCSKDELAINGSYTDPMGRRKSKRFKVAAESEFSPDFGSITRQLRSRRMQKEFTVETYETRNVSDVCVLSSQADVELIPGEIVAERDSFKSVDCNDMSVGLTEGAESLGVNMQEPMKDRNMPENTSEQNMVEVHPPSISLPEEDMMGSVCRKSITGTKELHGRTISVGRDLSPNMGSKFSKNGKTAKRSISVEEENLVLEKSDSGDHLGPSPEVLELEKSEVWIITDKGVVMPSPVKPSEKRNGDYGEGSMRKNSERVALDKKRLASKFRLSNGGLPSCSSSGDSARYKVKETMRLFHETCKKIMQEEEARPRKRDGGNFKVVCEASKILKSKGKNLYSGTQIIGTVPGVEVGDEFQYRMELNLLGIHRPSQSGIDYMKDDGGELVATSIVSSGGYNDVLDNSDVLIYTGQGGNVGKKKNNEPPKDQQLVTGNLALKNSINKKNPVRVIRGIKNTTLQSSVVAKNYVYDGLYLVEEYWEETGSHGKLVFKFKLRRIPGQPELPWKEVAKSKKSEFRDGLCNVDITEGKETLPICAVNNLDDEKPPPFIYTAKMIYPDWCRPIPPKSCGCTNGCSKSKNCACIVKNGGKIPYYDGAIVEIKPLVYECGPHCKCPPSCNMRVSQHGIKIKLEIFKTESRGWGVRSLESIPIGSFICEYAGELLEDKQAESLTGKDEYLFDLGDEDDPFTINAAQKGNIGRFINHSCSPNLYAQDVLYDHEEIRIPHIMFFALDNIPPLQELSYDYNYKIDQVYDSNGNIKKKFCYCGSAECSGRLY.

Disordered regions lie at residues 187–210 and 254–276; these read VGRD…KRSI and SPVK…KNSE. The span at 194–203 shows a compositional bias: polar residues; that stretch reads NMGSKFSKNG. Basic and acidic residues predominate over residues 258–276; the sequence is PSEKRNGDYGEGSMRKNSE. A YDG domain is found at 365–515; that stretch reads GTVPGVEVGD…KLVFKFKLRR (151 aa). The Pre-SET domain maps to 585-644; it reads KSCGCTNGCSKSKNCACIVKNGGKIPYYDGAIVEIKPLVYECGPHCKCPPSCNMRVSQHG. The 118-residue stretch at 647–764 folds into the SET domain; it reads IKLEIFKTES…PLQELSYDYN (118 aa). The Post-SET domain maps to 778–794; the sequence is KKKFCYCGSAECSGRLY.

The protein belongs to the class V-like SAM-binding methyltransferase superfamily. Histone-lysine methyltransferase family. Suvar3-9 subfamily. Expressed in leaves stems and flowers.

The protein resides in the nucleus. Its subcellular location is the chromosome. It localises to the centromere. It catalyses the reaction N(6)-methyl-L-lysyl(9)-[histone H3] + S-adenosyl-L-methionine = N(6),N(6)-dimethyl-L-lysyl(9)-[histone H3] + S-adenosyl-L-homocysteine + H(+). The catalysed reaction is L-lysyl(9)-[histone H3] + S-adenosyl-L-methionine = N(6)-methyl-L-lysyl(9)-[histone H3] + S-adenosyl-L-homocysteine + H(+). Its function is as follows. Histone methyltransferase. Methylates 'Lys-9' of histone H3. H3 'Lys-9' methylation represents a specific tag for epigenetic transcriptional repression. This is Histone-lysine N-methyltransferase, H3 lysine-9 specific SUVH5 (SUVH5) from Arabidopsis thaliana (Mouse-ear cress).